Here is a 498-residue protein sequence, read N- to C-terminus: Neoxanthin synthase, chloroplastic (498 aa).

A chloroplast-targeting transit peptide spans 1–42; that stretch reads METLLKPFPSLLLSSPTPYRSIVQQNPSFLSPTTKKKSRKCL.

This sequence belongs to the lycopene cyclase family. In terms of tissue distribution, expressed exclusively in chromoplast-containing tissues of flowers and fruits. Expressed in preanthesis flowers.

It localises to the plastid. The protein localises to the chloroplast. The enzyme catalyses all-trans-violaxanthin = all-trans-neoxanthin. It catalyses the reaction a carotenoid psi-end group = a carotenoid beta-end derivative. The protein operates within carotenoid biosynthesis; neoxanthin biosynthesis. Its pathway is carotenoid biosynthesis; beta-carotene biosynthesis. Its function is as follows. Involved in the synthesis of neoxanthin, the last product of carotenoid synthesis and a precursor of abscisic acid. Involved in the beta-carotene biosynthesis. This chain is Neoxanthin synthase, chloroplastic, found in Solanum lycopersicum (Tomato).